Here is a 155-residue protein sequence, read N- to C-terminus: Interleukin-2 (155 aa).

An N-terminal signal peptide occupies residues Met-1–Ser-20. Thr-23 carries an O-linked (GalNAc...) threonine glycan. A disulfide bridge links Cys-78 with Cys-126.

The protein belongs to the IL-2 family.

The protein resides in the secreted. Functionally, cytokine produced by activated CD4-positive helper T-cells and to a lesser extend activated CD8-positive T-cells and natural killer (NK) cells that plays pivotal roles in the immune response and tolerance. Binds to a receptor complex composed of either the high-affinity trimeric IL-2R (IL2RA/CD25, IL2RB/CD122 and IL2RG/CD132) or the low-affinity dimeric IL-2R (IL2RB and IL2RG). Interaction with the receptor leads to oligomerization and conformation changes in the IL-2R subunits resulting in downstream signaling starting with phosphorylation of JAK1 and JAK3. In turn, JAK1 and JAK3 phosphorylate the receptor to form a docking site leading to the phosphorylation of several substrates including STAT5. This process leads to activation of several pathways including STAT, phosphoinositide-3-kinase/PI3K and mitogen-activated protein kinase/MAPK pathways. Functions as a T-cell growth factor and can increase NK-cell cytolytic activity as well. Promotes strong proliferation of activated B-cells and subsequently immunoglobulin production. Plays a pivotal role in regulating the adaptive immune system by controlling the survival and proliferation of regulatory T-cells, which are required for the maintenance of immune tolerance. Moreover, participates in the differentiation and homeostasis of effector T-cell subsets, including Th1, Th2, Th17 as well as memory CD8-positive T-cells. The protein is Interleukin-2 (Il2) of Rattus norvegicus (Rat).